Reading from the N-terminus, the 411-residue chain is Arginine deiminase (411 aa).

The active-site Amidino-cysteine intermediate is C401.

Belongs to the arginine deiminase family.

Its subcellular location is the cytoplasm. The enzyme catalyses L-arginine + H2O = L-citrulline + NH4(+). Its pathway is amino-acid degradation; L-arginine degradation via ADI pathway; carbamoyl phosphate from L-arginine: step 1/2. This chain is Arginine deiminase, found in Streptococcus equi subsp. zooepidemicus (strain MGCS10565).